The following is a 333-amino-acid chain: Ketol-acid reductoisomerase (NADP(+)) (333 aa).

One can recognise a KARI N-terminal Rossmann domain in the interval 2-182 (AELFYDADAD…GGTRAGVIKT (181 aa)). Residues 25–28 (YGSQ), S51, S53, and 83–86 (DPIQ) contribute to the NADP(+) site. The active site involves H108. NADP(+) is bound at residue G134. The 146-residue stretch at 183–328 (TFTEETETDL…KELRKLMSWV (146 aa)) folds into the KARI C-terminal knotted domain. Residues D191, E195, E227, and E231 each coordinate Mg(2+). S252 contributes to the substrate binding site.

The protein belongs to the ketol-acid reductoisomerase family. Mg(2+) is required as a cofactor.

It carries out the reaction (2R)-2,3-dihydroxy-3-methylbutanoate + NADP(+) = (2S)-2-acetolactate + NADPH + H(+). It catalyses the reaction (2R,3R)-2,3-dihydroxy-3-methylpentanoate + NADP(+) = (S)-2-ethyl-2-hydroxy-3-oxobutanoate + NADPH + H(+). It functions in the pathway amino-acid biosynthesis; L-isoleucine biosynthesis; L-isoleucine from 2-oxobutanoate: step 2/4. Its pathway is amino-acid biosynthesis; L-valine biosynthesis; L-valine from pyruvate: step 2/4. Its function is as follows. Involved in the biosynthesis of branched-chain amino acids (BCAA). Catalyzes an alkyl-migration followed by a ketol-acid reduction of (S)-2-acetolactate (S2AL) to yield (R)-2,3-dihydroxy-isovalerate. In the isomerase reaction, S2AL is rearranged via a Mg-dependent methyl migration to produce 3-hydroxy-3-methyl-2-ketobutyrate (HMKB). In the reductase reaction, this 2-ketoacid undergoes a metal-dependent reduction by NADPH to yield (R)-2,3-dihydroxy-isovalerate. This is Ketol-acid reductoisomerase (NADP(+)) from Streptomyces avermitilis (strain ATCC 31267 / DSM 46492 / JCM 5070 / NBRC 14893 / NCIMB 12804 / NRRL 8165 / MA-4680).